The sequence spans 117 residues: V-type sodium ATPase subunit F (117 aa).

Residues 1–20 (MARILTRIKEAEENNQKKEE) form a disordered region. Basic and acidic residues predominate over residues 7 to 20 (RIKEAEENNQKKEE).

Belongs to the V-ATPase G subunit family.

Functionally, involved in ATP-driven sodium extrusion. This Enterococcus hirae (strain ATCC 9790 / DSM 20160 / JCM 8729 / LMG 6399 / NBRC 3181 / NCIMB 6459 / NCDO 1258 / NCTC 12367 / WDCM 00089 / R) protein is V-type sodium ATPase subunit F (ntpF).